Here is a 1237-residue protein sequence, read N- to C-terminus: Mediator of RNA polymerase II transcription subunit 5 (1237 aa).

2 disordered regions span residues 1109 to 1131 and 1202 to 1226; these read DDEPCSPQPPHAAANATSHTSNA and HGAQQCRERTQNDAPVNGGKDADSG. A compositionally biased stretch (low complexity) spans 1119–1131; sequence HAAANATSHTSNA.

It belongs to the Mediator complex subunit 5 family. As to quaternary structure, component of the Mediator complex.

It is found in the nucleus. Component of the Mediator complex, a coactivator involved in the regulated transcription of nearly all RNA polymerase II-dependent genes. Mediator functions as a bridge to convey information from gene-specific regulatory proteins to the basal RNA polymerase II transcription machinery. Mediator is recruited to promoters by direct interactions with regulatory proteins and serves as a scaffold for the assembly of a functional preinitiation complex with RNA polymerase II and the general transcription factors. In Mycosarcoma maydis (Corn smut fungus), this protein is Mediator of RNA polymerase II transcription subunit 5 (NUT1).